The chain runs to 134 residues: Complexin-2 (134 aa).

The tract at residues 1-114 is disordered; sequence MDFVMKQALG…CGDEEEEEEE (114 aa). Positions 15–85 are enriched in basic and acidic residues; that stretch reads DMGKMLGGEE…EEKEAEEKAA (71 aa). Positions 28-84 form a coiled coil; that stretch reads PDAQKKEEERQEALRQQEEERKAKHARMEAEREKVRQQIRDKYGLKKKEEKEAEEKA. The tract at residues 41–97 is interaction with the SNARE complex; sequence LRQQEEERKAKHARMEAEREKVRQQIRDKYGLKKKEEKEAEEKAALEQPCEGSLTRP. Serine 93 is modified (phosphoserine).

This sequence belongs to the complexin/synaphin family. In terms of assembly, binds to the SNARE core complex containing SNAP25, VAMP2 and STX1A. Nervous system. Also present in adrenal chromaffin cells (at protein level).

Its subcellular location is the cytoplasm. The protein resides in the cytosol. The protein localises to the presynapse. It localises to the nucleus. It is found in the perikaryon. Negatively regulates the formation of synaptic vesicle clustering at active zone to the presynaptic membrane in postmitotic neurons. Positively regulates a late step in exocytosis of various cytoplasmic vesicles, such as synaptic vesicles and other secretory vesicles. Also involved in mast cell exocytosis. This chain is Complexin-2 (CPLX2), found in Bos taurus (Bovine).